Consider the following 278-residue polypeptide: NADPH-dependent 7-cyano-7-deazaguanine reductase (278 aa).

87–89 serves as a coordination point for substrate; sequence IES. 89–90 is an NADPH binding site; the sequence is SK. C185 serves as the catalytic Thioimide intermediate. The active-site Proton donor is D192. Residue 224-225 coordinates substrate; it reads HE. 253 to 254 provides a ligand contact to NADPH; that stretch reads RG. The disordered stretch occupies residues 255-278; that stretch reads GLDINPYRSTNPTFSVQNHRSFRQ. A compositionally biased stretch (polar residues) spans 261–278; that stretch reads YRSTNPTFSVQNHRSFRQ.

It belongs to the GTP cyclohydrolase I family. QueF type 2 subfamily. Homodimer.

The protein resides in the cytoplasm. It catalyses the reaction 7-aminomethyl-7-carbaguanine + 2 NADP(+) = 7-cyano-7-deazaguanine + 2 NADPH + 3 H(+). It participates in tRNA modification; tRNA-queuosine biosynthesis. Catalyzes the NADPH-dependent reduction of 7-cyano-7-deazaguanine (preQ0) to 7-aminomethyl-7-deazaguanine (preQ1). The chain is NADPH-dependent 7-cyano-7-deazaguanine reductase from Coxiella burnetii (strain CbuK_Q154) (Coxiella burnetii (strain Q154)).